A 342-amino-acid chain; its full sequence is Manganese-dependent ADP-ribose/CDP-alcohol diphosphatase (342 aa).

Methionine 1 is subject to N-acetylmethionine. The Zn(2+) site is built by aspartate 25, glutamine 27, aspartate 74, asparagine 110, histidine 241, histidine 278, and histidine 280.

It belongs to the ADPRibase-Mn family. As to quaternary structure, monomer. Requires Mg(2+) as cofactor.

The catalysed reaction is CDP-choline + H2O = phosphocholine + CMP + 2 H(+). It carries out the reaction ADP-D-ribose + H2O = D-ribose 5-phosphate + AMP + 2 H(+). The enzyme catalyses CDP-glycerol + H2O = sn-glycerol 3-phosphate + CMP + 2 H(+). In terms of biological role, hydrolyzes ADP-ribose, IDP-ribose, CDP-glycerol, CDP-choline and CDP-ethanolamine, but not other non-reducing ADP-sugars or CDP-glucose. May be involved in immune cell signaling as suggested by the second-messenger role of ADP-ribose, which activates TRPM2 as a mediator of oxidative/nitrosative stress. The polypeptide is Manganese-dependent ADP-ribose/CDP-alcohol diphosphatase (ADPRM) (Homo sapiens (Human)).